Here is an 85-residue protein sequence, read N- to C-terminus: RNA-binding protein Hfq (85 aa).

A Sm domain is found at D10–L70.

It belongs to the Hfq family. As to quaternary structure, homohexamer.

Its function is as follows. RNA chaperone that binds small regulatory RNA (sRNAs) and mRNAs to facilitate mRNA translational regulation in response to envelope stress, environmental stress and changes in metabolite concentrations. Also binds with high specificity to tRNAs. The chain is RNA-binding protein Hfq from Clostridium botulinum (strain 657 / Type Ba4).